Here is a 376-residue protein sequence, read N- to C-terminus: Dihydroorotate dehydrogenase (quinone) (376 aa).

FMN contacts are provided by residues 78 to 82 (AGFDK) and Thr-102. Residue Lys-82 participates in substrate binding. Substrate is bound at residue 127-131 (NRMGF). Asn-157 and Asn-190 together coordinate FMN. Asn-190 contributes to the substrate binding site. Ser-193 functions as the Nucleophile in the catalytic mechanism. A substrate-binding site is contributed by Asn-195. Residues Lys-228 and Thr-256 each contribute to the FMN site. 257-258 (NT) contacts substrate. Residues Gly-286, Gly-315, and 336-337 (YT) each bind FMN.

Belongs to the dihydroorotate dehydrogenase family. Type 2 subfamily. As to quaternary structure, monomer. Requires FMN as cofactor.

Its subcellular location is the cell membrane. It catalyses the reaction (S)-dihydroorotate + a quinone = orotate + a quinol. The protein operates within pyrimidine metabolism; UMP biosynthesis via de novo pathway; orotate from (S)-dihydroorotate (quinone route): step 1/1. Functionally, catalyzes the conversion of dihydroorotate to orotate with quinone as electron acceptor. The polypeptide is Dihydroorotate dehydrogenase (quinone) (Nostoc sp. (strain PCC 7120 / SAG 25.82 / UTEX 2576)).